The chain runs to 123 residues: Small ribosomal subunit protein uS12 (123 aa).

Aspartate 89 bears the 3-methylthioaspartic acid mark.

It belongs to the universal ribosomal protein uS12 family. As to quaternary structure, part of the 30S ribosomal subunit. Contacts proteins S8 and S17. May interact with IF1 in the 30S initiation complex.

Functionally, with S4 and S5 plays an important role in translational accuracy. Its function is as follows. Interacts with and stabilizes bases of the 16S rRNA that are involved in tRNA selection in the A site and with the mRNA backbone. Located at the interface of the 30S and 50S subunits, it traverses the body of the 30S subunit contacting proteins on the other side and probably holding the rRNA structure together. The combined cluster of proteins S8, S12 and S17 appears to hold together the shoulder and platform of the 30S subunit. In Rhodopseudomonas palustris (strain BisA53), this protein is Small ribosomal subunit protein uS12.